Consider the following 109-residue polypeptide: Class I hydrophobin G (109 aa).

Residues 1–19 (MRLSILSVFSLVGAGMVSA) form the signal peptide. 4 disulfide bridges follow: Cys36-Cys90, Cys42-Cys84, Cys43-Cys76, and Cys91-Cys105.

Belongs to the fungal hydrophobin family.

The protein resides in the secreted. It localises to the cell wall. In terms of biological role, aerial growth, conidiation, and dispersal of filamentous fungi in the environment rely upon a capability of their secreting small amphipathic proteins called hydrophobins (HPBs) with low sequence identity. Class I can self-assemble into an outermost layer of rodlet bundles on aerial cell surfaces, conferring cellular hydrophobicity that supports fungal growth, development and dispersal; whereas Class II form highly ordered films at water-air interfaces through intermolecular interactions but contribute nothing to the rodlet structure. In P.expansum, hydrophobins contribute to germination, tolerance to cold stress and mycotoxins patulin and citrinin production. The sequence is that of Class I hydrophobin G from Penicillium expansum (Blue mold rot fungus).